The primary structure comprises 150 residues: Ribonuclease K6 (150 aa).

The signal sequence occupies residues 1 to 23 (MVLCFPLLLLVLVLWGQVCPLHA). Catalysis depends on histidine 38, which acts as the Proton acceptor. 4 disulfide bridges follow: cysteine 46–cysteine 104, cysteine 60–cysteine 114, cysteine 78–cysteine 129, and cysteine 85–cysteine 92. The N-linked (GlcNAc...) asparagine glycan is linked to asparagine 55. Substrate is bound by residues 61–65 (KPQNT) and lysine 86. Asparagine 100 is a glycosylation site (N-linked (GlcNAc...) asparagine). Position 105 (arginine 105) interacts with substrate. Histidine 145 functions as the Proton donor in the catalytic mechanism.

It belongs to the pancreatic ribonuclease family. Interacts (via N-terminus) with bacterial lipopolysaccharide (LPS).

It is found in the secreted. The protein resides in the lysosome. Its subcellular location is the cytoplasmic granule. Its function is as follows. Ribonuclease which shows a preference for the pyrimidines uridine and cytosine. Has potent antibacterial activity against a range of Gram-positive and Gram-negative bacteria, including P.aeruginosa, A.baumanii, M.luteus, S.aureus, E.faecalis, E.faecium, S.saprophyticus and E.coli. Causes loss of bacterial membrane integrity, and also promotes agglutination of Gram-negative bacteria. Probably contributes to urinary tract sterility. Bactericidal activity is independent of RNase activity. The sequence is that of Ribonuclease K6 (RNASE6) from Aotus trivirgatus (Three-striped night monkey).